The following is a 320-amino-acid chain: Malate dehydrogenase (320 aa).

NAD(+) is bound by residues 10–15 (GSGMIG) and Asp-34. Substrate-binding residues include Arg-83 and Arg-89. NAD(+) is bound by residues Asn-96 and 119-121 (ITN). The substrate site is built by Asn-121 and Arg-152. The active-site Proton acceptor is the His-176.

The protein belongs to the LDH/MDH superfamily. MDH type 3 family.

The catalysed reaction is (S)-malate + NAD(+) = oxaloacetate + NADH + H(+). In terms of biological role, catalyzes the reversible oxidation of malate to oxaloacetate. The protein is Malate dehydrogenase of Brucella melitensis biotype 2 (strain ATCC 23457).